Reading from the N-terminus, the 127-residue chain is DNA-directed RNA polymerases I, II, and III subunit RPABC2 (127 aa).

A compositionally biased stretch (acidic residues) spans 1-34; the sequence is MSDNEDNFDGDDFDDVEEDEGLDDLENAEEEGQE. Positions 1 to 53 are disordered; sequence MSDNEDNFDGDDFDDVEEDEGLDDLENAEEEGQENVEILPSGERPQANQKRIT. At Ser-2 the chain carries N-acetylserine. Ser-2 carries the phosphoserine; by CK2 modification.

Belongs to the archaeal Rpo6/eukaryotic RPB6 RNA polymerase subunit family. Component of the RNA polymerase I (Pol I), RNA polymerase II (Pol II) and RNA polymerase III (Pol III) complexes consisting of at least 13, 12 and 17 subunits, respectively. Pol I complex consists of a ten-subunit catalytic core composed of POLR1A/RPA1, POLR1B/RPA2, POLR1C/RPAC1, POLR1D/RPAC2, POLR1H/RPA12, POLR2E/RPABC1, POLR2F/RPABC2, POLR2H/RPABC3, POLR2K/RPABC4 and POLR2L/RPABC5; a mobile stalk subunit POLR1F/RPA43 protruding from the core and additional subunits homologous to general transcription factors POLR1E/RPA49 and POLR1G/RPA34. Part of Pol I pre-initiation complex (PIC), in which Pol I core assembles with RRN3 and promoter-bound UTBF and SL1/TIF-IB complex. Pol II complex contains a ten-subunit catalytic core composed of POLR2A/RPB1, POLR2B/RPB2, POLR2C/RPB3, POLR2I/RPB9, POLR2J/RPB11, POLR2E/RPABC1, POLR2F/RPABC2, POLR2H/RPABC3, POLR2K/RPABC4 and POLR2L/RPABC5 and a mobile stalk composed of two subunits POLR2D/RPB4 and POLR2G/RPB7. Part of Pol II(G) complex, in which Pol II core associates with an additional subunit POLR2M; unlike conventional Pol II, Pol II(G) functions as a transcriptional repressor. Part of TBP-based Pol II pre-initiation complex (PIC), in which Pol II core assembles with general transcription factors and other specific initiation factors including GTF2E1, GTF2E2, GTF2F1, GTF2F2, TCEA1, ERCC2, ERCC3, GTF2H2, GTF2H3, GTF2H4, GTF2H5, GTF2A1, GTF2A2, GTF2B and TBP; this large multi-subunit PIC complex mediates DNA unwinding and targets Pol II core to the transcription start site where the first phosphodiester bond forms. Pol III complex consists of a ten-subunit catalytic core composed of POLR3A/RPC1, POLR3B/RPC2, POLR1C/RPAC1, POLR1D/RPAC2, POLR3K/RPC10, POLR2E/RPABC1, POLR2F/RPABC2, POLR2H/RPABC3, POLR2K/RPABC4 and POLR2L/RPABC5; a mobile stalk composed of two subunits POLR3H/RPC8 and CRCP/RPC9, protruding from the core and functioning primarily in transcription initiation; and additional subunits homologous to general transcription factors of the RNA polymerase II machinery, POLR3C/RPC3-POLR3F/RPC6-POLR3G/RPC7 heterotrimer required for transcription initiation and POLR3D/RPC4-POLR3E/RPC5 heterodimer involved in both transcription initiation and termination.

It is found in the nucleus. The protein resides in the nucleolus. Functionally, DNA-dependent RNA polymerase catalyzes the transcription of DNA into RNA using the four ribonucleoside triphosphates as substrates. Common component of RNA polymerases I, II, and III which synthesize ribosomal RNA precursors, mRNA precursors and many functional non-coding RNAs, and small RNAs, such as 5S rRNA and tRNAs, respectively. Pol II is the central component of the basal RNA polymerase II transcription machinery. Pols are composed of mobile elements that move relative to each other. In Pol II, POLR2F/RPABC2 is part of the clamp element and together with parts of POLR2A/RPB1 and POLR2B/RPB2 forms a pocket to which the POLR2D/RPB4-POLR2G/RPB7 subcomplex binds. The sequence is that of DNA-directed RNA polymerases I, II, and III subunit RPABC2 from Homo sapiens (Human).